Reading from the N-terminus, the 283-residue chain is Protoheme IX farnesyltransferase (283 aa).

Helical transmembrane passes span 6 to 26 (LLLTKPGIILGNLVTVMAGFL), 35 to 55 (FGLFFSTILGLAFIMASGCVF), 85 to 105 (AIVFGLALAIVGAIILYFYTN), 106 to 126 (LLTLVIAELGFIIYVFFYSIW), 131 to 151 (VYGTAIGSLAGAVPPLVGYCA), 160 to 180 (AFILFAMMVFWQMPHFFSIAI), 207 to 227 (ILLYIIIFTLTSSLLTFFHFT), 230 to 250 (LYLILTIGLGLTWLLMGLRGL), and 262 to 282 (MFRFSLVIISVLSLTIPFDLV).

This sequence belongs to the UbiA prenyltransferase family. Protoheme IX farnesyltransferase subfamily.

The protein resides in the cell inner membrane. The enzyme catalyses heme b + (2E,6E)-farnesyl diphosphate + H2O = Fe(II)-heme o + diphosphate. Its pathway is porphyrin-containing compound metabolism; heme O biosynthesis; heme O from protoheme: step 1/1. Its function is as follows. Converts heme B (protoheme IX) to heme O by substitution of the vinyl group on carbon 2 of heme B porphyrin ring with a hydroxyethyl farnesyl side group. This Protochlamydia amoebophila (strain UWE25) protein is Protoheme IX farnesyltransferase.